The chain runs to 229 residues: MGQKIHPLGFRLGITQEHRSKWYAKASDYPRLVLEDKKLRDNLFKQYPKANIVDIIIKRRQTTQDLETKESVDVIEVSIYTAVPGKIIGRSKATITELKESLEKLCQLDRMKHNLPQIRIILTILKVQNPYSSASVIADYLIEQLEQRIPFRAALKKALERIRLAKLEGIKIEISGRLNGAEIARSEWVRKGRVPLQTLRADIDYSAKTAKTIYGILGIKVWAFKGERT.

The region spanning 39–128 (LRDNLFKQYP…RIILTILKVQ (90 aa)) is the KH type-2 domain.

This sequence belongs to the universal ribosomal protein uS3 family. As to quaternary structure, part of the 30S ribosomal subunit.

The protein localises to the plastid. It is found in the chloroplast. The sequence is that of Small ribosomal subunit protein uS3c (rps3) from Tupiella akineta (Green alga).